Here is a 78-residue protein sequence, read N- to C-terminus: PFVITSPCIGEKAADCVETCPVDAIHEGPDQYYIDPDLCIDCAACEPVCPVNAIYQEEFVPEDEKEFIEKNRNFFRNR.

4Fe-4S ferredoxin-type domains lie at 2 to 29 and 30 to 59; these read FVIT…HEGP and DQYY…QEEF. C8 and C16 together coordinate [3Fe-4S] cluster. Residues C20, C39, C42, and C45 each coordinate [4Fe-4S] cluster. A [3Fe-4S] cluster-binding site is contributed by C49.

[3Fe-4S] cluster is required as a cofactor. Requires [4Fe-4S] cluster as cofactor.

Ferredoxins are iron-sulfur proteins that transfer electrons in a wide variety of metabolic reactions. This Alicyclobacillus acidocaldarius subsp. acidocaldarius (Bacillus acidocaldarius) protein is Ferredoxin.